We begin with the raw amino-acid sequence, 361 residues long: Mannose-1-phosphate guanyltransferase 2 (361 aa).

This sequence belongs to the transferase hexapeptide repeat family.

It localises to the cytoplasm. The catalysed reaction is alpha-D-mannose 1-phosphate + GTP + H(+) = GDP-alpha-D-mannose + diphosphate. It participates in nucleotide-sugar biosynthesis; GDP-alpha-D-mannose biosynthesis; GDP-alpha-D-mannose from alpha-D-mannose 1-phosphate (GTP route): step 1/1. Involved in cell wall synthesis where it is required for glycosylation. Involved in cell cycle progression through cell-size checkpoint. The chain is Mannose-1-phosphate guanyltransferase 2 (MPG1) from Candida glabrata (strain ATCC 2001 / BCRC 20586 / JCM 3761 / NBRC 0622 / NRRL Y-65 / CBS 138) (Yeast).